Reading from the N-terminus, the 478-residue chain is H(+)/Cl(-) exchange transporter ClcA (478 aa).

Residues 1-32 (MTHSTQQLSPEGVAEGKRGRLIRELVNRDKTP) are Cytoplasmic-facing. A helical transmembrane segment spans residues 33–69 (LIILIMAAVVGVVTGLLGVAFDRGVDWVQQQRLLALA). The Periplasmic segment spans residues 70–76 (NVADSAL). Residues 77-100 (LVWPLAFIMSALLAMMGYFLVSRF) form a helical membrane-spanning segment. Residues 106–110 (GSGIP) carry the Selectivity filter part_1 motif. Ser107 contributes to the chloride binding site. An intramembrane region (helical) is located at residues 109-116 (IPEIEGAM). Over 117–123 (EEMRPVR) the chain is Cytoplasmic. The next 2 helical transmembrane spans lie at 124-141 (WWRV…TLGA) and 148-166 (EGPM…VDIF). A Selectivity filter part_2 motif is present at residues 146–150 (GREGP). Over 167–176 (RLRSPEARHS) the chain is Cytoplasmic. Intramembrane regions (helical) lie at residues 177–189 (LLAT…LSAA) and 193–201 (PLAGILFVI). Residues 202 to 214 (EEMRSQFRYSLVS) are Cytoplasmic-facing. The chain crosses the membrane as a helical span at residues 215–232 (IKAVFIGVITSTIVYRYF). Topologically, residues 233–252 (NGERAIIEVGKLSDAPLNTL) are periplasmic. The helical transmembrane segment at 253-281 (WLYLLLGIIFGAVGVIFNALIFRTQDMFV) threads the bilayer. The Cytoplasmic portion of the chain corresponds to 282 to 287 (RFHGGD). The helical transmembrane segment at 288–309 (WRKLVLIGGLLGGMCGLLALLH) threads the bilayer. At 310–329 (GNAVGGGFALIPIAAAGNFS) the chain is on the periplasmic side. 2 helical membrane-spanning segments follow: residues 330 to 349 (IGML…LCFG) and 355 to 376 (GIFA…LSCA). Positions 355-359 (GIFAP) match the Selectivity filter part_3 motif. The chloride site is built by Ile356 and Phe357. At 377–386 (HFFPQYGIEA) the chain is on the periplasmic side. Positions 387-401 (GTFAIAGMGALFAAS) form an intramembrane region, helical. Residues 402 to 404 (VRA) constitute an intramembrane region (note=Loop between two helices). The helical intramembrane region spans 405–416 (PLTGIVLVLEMT). The note=Loop between two helices intramembrane region spans 417 to 421 (DNYQL). The chain crosses the membrane as a helical span at residues 422-438 (ILPMIVTCLGATLIAQF). Over 439–478 (MGGKPLYSAILARTLAKQEQARATVIAQEPAVENTPQTGR) the chain is Cytoplasmic. Tyr445 is a binding site for chloride.

Belongs to the chloride channel (TC 2.A.49) family. ClcA subfamily. In terms of assembly, homodimer.

Its subcellular location is the cell inner membrane. The catalysed reaction is 2 chloride(in) + H(+)(out) = 2 chloride(out) + H(+)(in). In terms of biological role, proton-coupled chloride transporter. Functions as antiport system and exchanges two chloride ions for 1 proton. Probably acts as an electrical shunt for an outwardly-directed proton pump that is linked to amino acid decarboxylation, as part of the extreme acid resistance (XAR) response. The polypeptide is H(+)/Cl(-) exchange transporter ClcA (Yersinia pseudotuberculosis serotype IB (strain PB1/+)).